The primary structure comprises 768 residues: DNA ligase 1 (768 aa).

The disordered stretch occupies residues 42–139; it reads VEVSQSSSDS…KEPPLESNAR (98 aa). The span at 52-99 shows a compositional bias: basic and acidic residues; that stretch reads KNVDGRSTSEKRKVESVKLVDESKHNNHDDTGTQNVERENNIVSEAKK. Residues 104–124 are compositionally biased toward low complexity; that stretch reads GSSSSSSDAVSSNNDSGASTP. Residues 309-318 form an interaction with target DNA region; it reads KLRLQLAEKT. ATP is bound at residue Glu414. Lys416 (N6-AMP-lysine intermediate) is an active-site residue. ATP-binding residues include Arg421 and Arg437. Residue Glu469 participates in Mg(2+) binding. Positions 490-492 are interaction with target DNA; sequence KRK. Residue Glu568 coordinates Mg(2+). 3 residues coordinate ATP: Lys573, Arg587, and Lys593.

The protein belongs to the ATP-dependent DNA ligase family. The cofactor is Mg(2+).

It localises to the nucleus. It carries out the reaction ATP + (deoxyribonucleotide)n-3'-hydroxyl + 5'-phospho-(deoxyribonucleotide)m = (deoxyribonucleotide)n+m + AMP + diphosphate.. DNA ligase that seals nicks in double-stranded DNA during DNA replication, DNA recombination and DNA repair. The chain is DNA ligase 1 (cdc17) from Schizosaccharomyces pombe (strain 972 / ATCC 24843) (Fission yeast).